Reading from the N-terminus, the 122-residue chain is Large ribosomal subunit protein uL14 (122 aa).

Belongs to the universal ribosomal protein uL14 family. As to quaternary structure, part of the 50S ribosomal subunit. Forms a cluster with proteins L3 and L19. In the 70S ribosome, L14 and L19 interact and together make contacts with the 16S rRNA in bridges B5 and B8.

Its function is as follows. Binds to 23S rRNA. Forms part of two intersubunit bridges in the 70S ribosome. The chain is Large ribosomal subunit protein uL14 from Rickettsia rickettsii (strain Iowa).